Consider the following 158-residue polypeptide: NAD(P)H-quinone oxidoreductase subunit J, chloroplastic (158 aa).

It belongs to the complex I 30 kDa subunit family. As to quaternary structure, NDH is composed of at least 16 different subunits, 5 of which are encoded in the nucleus.

Its subcellular location is the plastid. The protein localises to the chloroplast thylakoid membrane. It catalyses the reaction a plastoquinone + NADH + (n+1) H(+)(in) = a plastoquinol + NAD(+) + n H(+)(out). The catalysed reaction is a plastoquinone + NADPH + (n+1) H(+)(in) = a plastoquinol + NADP(+) + n H(+)(out). NDH shuttles electrons from NAD(P)H:plastoquinone, via FMN and iron-sulfur (Fe-S) centers, to quinones in the photosynthetic chain and possibly in a chloroplast respiratory chain. The immediate electron acceptor for the enzyme in this species is believed to be plastoquinone. Couples the redox reaction to proton translocation, and thus conserves the redox energy in a proton gradient. This is NAD(P)H-quinone oxidoreductase subunit J, chloroplastic from Platanus occidentalis (Sycamore).